We begin with the raw amino-acid sequence, 94 residues long: uncharacterized protein (94 aa).

This is an uncharacterized protein from Rickettsia prowazekii (strain Madrid E).